Reading from the N-terminus, the 240-residue chain is MPVSKCPKKSESLWKGWDRKAQRNGLRSQVYAVNGDYYVGEWKDNVKHGKGTQVWKKKGAIYEGDWKFGKRDGYGTLSLPDQQTGKCRRVYSGWWKGDKKSGYGIQFFGPKEYYEGDWCGSQRSGWGRMYYSNGDIYEGQWENDKPNGEGMLRLKNGNRYEGCWERGMKNGAGRFFHLDHGQLFEGFWVDNMAKCGTMIDFGRDEAPEPTQFPIPEVKILDPDGVLAEALAMFRKTEEGD.

The interaction with MDM2 stretch occupies residues 6–35 (CPKKSESLWKGWDRKAQRNGLRSQVYAVNG). MORN repeat units lie at residues 38 to 60 (YVGE…KKGA), 62 to 84 (YEGD…DQQT), 91 to 113 (YSGW…PKEY), 114 to 136 (YEGD…NGDI), 137 to 159 (YEGQ…NGNR), 160 to 182 (YEGC…DHGQ), and 184 to 205 (FEGF…GRDE). The tract at residues 76–100 (TLSLPDQQTGKCRRVYSGWWKGDKK) is interaction with SIRT1. An interaction with TP53 region spans residues 206–240 (APEPTQFPIPEVKILDPDGVLAEALAMFRKTEEGD).

Interacts with MEIG1. Interacts with TP53, MDM2 and SIRT1; the interactions mediate post-transcriptional modifications of TP53 by MDM2 and SIRT1.

It is found in the cytoplasmic vesicle. The protein localises to the secretory vesicle. Its subcellular location is the acrosome. Functionally, assembles a suppression complex (suppresome) by tethering SIRT1 and MDM2 to regulate composite modifications of p53/TP53. Confers both deacetylation-mediated functional inactivation, by SIRT1, and ubiquitination-dependent degradation, by MDM2, of p53/TP53, promoting a proliferative and cell survival behaviors. May play a role in the regulation of spermatogenesis. This is MORN repeat-containing protein 3 from Homo sapiens (Human).